Reading from the N-terminus, the 533-residue chain is Tryptophan 7-halogenase KtzQ (533 aa).

FAD is bound by residues G14, T16, A17, A40, E50, and A51. Residue K80 is part of the active site. E359 contributes to the L-tryptophan binding site. Residues T361 and G362 each coordinate chloride. Residue L363 coordinates FAD. Residues Y456, Y457, E463, and F467 each contribute to the L-tryptophan site.

Belongs to the flavin-dependent halogenase family. Bacterial tryptophan halogenase subfamily.

The enzyme catalyses L-tryptophan + FADH2 + chloride + O2 = 7-chloro-L-tryptophan + FAD + 2 H2O. Its function is as follows. Involved in the biosynthesis of kutznerides, actinomycete-derived antifungal and antimicrobial cyclic hexadepsipeptides. Together with KtzR, catalyzes the regiospecific dichlorination of L-tryptophan (L-Trp) to produce 6,7-dichloro-L-tryptophan. KtzQ catalyzes the chlorination of L-Trp at C7 position to yield 7-chlorotryptophan. Can also use 6-chloro-L-tryptophan as substrate and form 6,7-dichloro-L-tryptophan, but has a preference for halogenation at the 7 position of unmodified L-Trp. Cannot use piperazic acid or gamma,delta-dehydropiperazic acid. This chain is Tryptophan 7-halogenase KtzQ, found in Kutzneria sp. (strain 744).